A 262-amino-acid chain; its full sequence is Spindlin-W (262 aa).

A disordered region spans residues 1–49 (MKTPFGKSPAQRSRADAGHTRVSASMMKKRTSHKKHRNNVGPSKPISQP). Basic residues predominate over residues 27 to 38 (MKKRTSHKKHRN).

The protein belongs to the SPIN/STSY family. In terms of tissue distribution, expressed predominantly in ovarian granulosa and thecal cell.

The protein resides in the nucleus. Its function is as follows. May play a role in mitosis. This chain is Spindlin-W (SPINW), found in Gallus gallus (Chicken).